Consider the following 347-residue polypeptide: N-acetyl-gamma-glutamyl-phosphate reductase (347 aa).

Cys-152 is a catalytic residue.

Belongs to the NAGSA dehydrogenase family. Type 1 subfamily.

The protein resides in the cytoplasm. It carries out the reaction N-acetyl-L-glutamate 5-semialdehyde + phosphate + NADP(+) = N-acetyl-L-glutamyl 5-phosphate + NADPH + H(+). Its pathway is amino-acid biosynthesis; L-arginine biosynthesis; N(2)-acetyl-L-ornithine from L-glutamate: step 3/4. In terms of biological role, catalyzes the NADPH-dependent reduction of N-acetyl-5-glutamyl phosphate to yield N-acetyl-L-glutamate 5-semialdehyde. This Ehrlichia ruminantium (strain Gardel) protein is N-acetyl-gamma-glutamyl-phosphate reductase.